Here is a 147-residue protein sequence, read N- to C-terminus: Large ribosomal subunit protein uL16 (147 aa).

This sequence belongs to the universal ribosomal protein uL16 family. As to quaternary structure, part of the 50S ribosomal subunit.

Binds 23S rRNA and is also seen to make contacts with the A and possibly P site tRNAs. The polypeptide is Large ribosomal subunit protein uL16 (Clostridium novyi (strain NT)).